The following is a 209-amino-acid chain: Endoplasmic reticulum vesicle protein 25 (209 aa).

A signal peptide spans 1-18 (MKYTTFGIISLFLSVTWA). Over 19-178 (LRFELAASFE…TNESTNRRVR (160 aa)) the chain is Lumenal. Positions 31–119 (PFCIRDFVEA…MRNVEVNIES (89 aa)) constitute a GOLD domain. The helical transmembrane segment at 179–199 (NFSMAVIVVFAALCAWQLNYL) threads the bilayer. Over 200–209 (KNYFRAKHII) the chain is Cytoplasmic.

The protein belongs to the EMP24/GP25L family.

It is found in the endoplasmic reticulum membrane. The protein resides in the golgi apparatus membrane. In terms of biological role, constituent of COPII-coated endoplasmic reticulum-derived transport vesicles. Required for efficient transport of a subset of secretory proteins to the Golgi. Facilitates retrograde transport from the Golgi to the endoplasmic reticulum. This is Endoplasmic reticulum vesicle protein 25 (ERV25) from Eremothecium gossypii (strain ATCC 10895 / CBS 109.51 / FGSC 9923 / NRRL Y-1056) (Yeast).